We begin with the raw amino-acid sequence, 110 residues long: MSLSEARYHDLVDAVQESVEDVFDDTSLDVDLENSGGVLTVRFDNGSQLILSRQPALRQLWVAARSGGFHFDYDEGSQLWLCDASGERLGELLTRVTQEQGGEALEFEDL.

The protein belongs to the frataxin family.

Functionally, involved in iron-sulfur (Fe-S) cluster assembly. May act as a regulator of Fe-S biogenesis. In Stutzerimonas stutzeri (strain A1501) (Pseudomonas stutzeri), this protein is Iron-sulfur cluster assembly protein CyaY.